A 416-amino-acid polypeptide reads, in one-letter code: Carboxypeptidase B (416 aa).

A signal peptide spans 1–15 (MAFLILVTLALASAH). A propeptide spans 16 to 109 (YSGEHFEGEK…LEGQFGRQVP (94 aa)) (activation peptide). One can recognise a Peptidase M14 domain in the interval 117–411 (KYNRWETIEA…LAIKHLARYV (295 aa)). Zn(2+)-binding residues include His-175 and Glu-178. Substrate-binding positions include 175 to 178 (HARE), Arg-233, and 250 to 251 (TR). Intrachain disulfides connect Cys-244–Cys-267 and Cys-258–Cys-272. His-303 lines the Zn(2+) pocket. Substrate-binding positions include 304-305 (SY) and Tyr-355. Catalysis depends on Glu-377, which acts as the Proton donor/acceptor.

This sequence belongs to the peptidase M14 family. Zn(2+) serves as cofactor.

Its subcellular location is the secreted. It is found in the zymogen granule lumen. It carries out the reaction Preferential release of a C-terminal lysine or arginine amino acid.. This Canis lupus familiaris (Dog) protein is Carboxypeptidase B (CPB1).